We begin with the raw amino-acid sequence, 507 residues long: ATP synthase subunit alpha, chloroplastic (507 aa).

G170–T177 contacts ATP.

It belongs to the ATPase alpha/beta chains family. F-type ATPases have 2 components, CF(1) - the catalytic core - and CF(0) - the membrane proton channel. CF(1) has five subunits: alpha(3), beta(3), gamma(1), delta(1), epsilon(1). CF(0) has four main subunits: a, b, b' and c.

Its subcellular location is the plastid. The protein localises to the chloroplast thylakoid membrane. The enzyme catalyses ATP + H2O + 4 H(+)(in) = ADP + phosphate + 5 H(+)(out). Its function is as follows. Produces ATP from ADP in the presence of a proton gradient across the membrane. The alpha chain is a regulatory subunit. The sequence is that of ATP synthase subunit alpha, chloroplastic from Nicotiana tabacum (Common tobacco).